The following is a 358-amino-acid chain: Pseudouridylate synthase RPUSD4, mitochondrial (358 aa).

Residues 1–12 (MRHAREVTFARL) constitute a mitochondrion transit peptide.

Belongs to the pseudouridine synthase RluA family.

The protein localises to the mitochondrion matrix. Its subcellular location is the nucleus. The protein resides in the cytoplasm. It carries out the reaction uridine in 5S rRNA = pseudouridine in 5S rRNA. The catalysed reaction is a uridine in tRNA = a pseudouridine in tRNA. The enzyme catalyses a uridine in mRNA = a pseudouridine in mRNA. Functionally, catalyzes uridine to pseudouridine isomerization (pseudouridylation) of different mitochondrial RNA substrates. Acts on position 1397 in 16S mitochondrial ribosomal RNA (16S mt-rRNA). This modification is required for the assembly of 16S mt-rRNA into a functional mitochondrial ribosome. Acts on position 39 in mitochondrial tRNA(Phe). Also catalyzes pseudouridylation of mRNAs in nucleus: acts as a regulator of pre-mRNA splicing by mediating pseudouridylation of pre-mRNAs at locations associated with alternatively spliced regions. Pseudouridylation of pre-mRNAs near splice sites directly regulates mRNA splicing and mRNA 3'-end processing. The sequence is that of Pseudouridylate synthase RPUSD4, mitochondrial from Danio rerio (Zebrafish).